We begin with the raw amino-acid sequence, 200 residues long: Imidazole glycerol phosphate synthase subunit HisH (200 aa).

In terms of domain architecture, Glutamine amidotransferase type-1 spans 3–200; sequence DLALIDAGGA…LRNFLEMSFP (198 aa). Catalysis depends on C78, which acts as the Nucleophile. Residues H179 and E181 contribute to the active site.

Heterodimer of HisH and HisF.

It is found in the cytoplasm. It catalyses the reaction 5-[(5-phospho-1-deoxy-D-ribulos-1-ylimino)methylamino]-1-(5-phospho-beta-D-ribosyl)imidazole-4-carboxamide + L-glutamine = D-erythro-1-(imidazol-4-yl)glycerol 3-phosphate + 5-amino-1-(5-phospho-beta-D-ribosyl)imidazole-4-carboxamide + L-glutamate + H(+). The enzyme catalyses L-glutamine + H2O = L-glutamate + NH4(+). It participates in amino-acid biosynthesis; L-histidine biosynthesis; L-histidine from 5-phospho-alpha-D-ribose 1-diphosphate: step 5/9. Functionally, IGPS catalyzes the conversion of PRFAR and glutamine to IGP, AICAR and glutamate. The HisH subunit catalyzes the hydrolysis of glutamine to glutamate and ammonia as part of the synthesis of IGP and AICAR. The resulting ammonia molecule is channeled to the active site of HisF. The chain is Imidazole glycerol phosphate synthase subunit HisH from Xanthomonas campestris pv. campestris (strain 8004).